The following is a 189-amino-acid chain: Elongation factor P (189 aa).

Lys34 is modified (N6-(3,6-diaminohexanoyl)-5-hydroxylysine).

It belongs to the elongation factor P family. May be beta-lysylated on the epsilon-amino group of Lys-34 by the combined action of EpmA and EpmB, and then hydroxylated on the C5 position of the same residue by EpmC (if this protein is present). Lysylation is critical for the stimulatory effect of EF-P on peptide-bond formation. The lysylation moiety may extend toward the peptidyltransferase center and stabilize the terminal 3-CCA end of the tRNA. Hydroxylation of the C5 position on Lys-34 may allow additional potential stabilizing hydrogen-bond interactions with the P-tRNA.

The protein resides in the cytoplasm. It participates in protein biosynthesis; polypeptide chain elongation. Its function is as follows. Involved in peptide bond synthesis. Alleviates ribosome stalling that occurs when 3 or more consecutive Pro residues or the sequence PPG is present in a protein, possibly by augmenting the peptidyl transferase activity of the ribosome. Modification of Lys-34 is required for alleviation. The chain is Elongation factor P from Idiomarina loihiensis (strain ATCC BAA-735 / DSM 15497 / L2-TR).